We begin with the raw amino-acid sequence, 295 residues long: UDP-N-acetylenolpyruvoylglucosamine reductase (295 aa).

The 165-residue stretch at 24 to 188 folds into the FAD-binding PCMH-type domain; the sequence is KVGGNAEIFF…LKAVFKINKG (165 aa). The active site involves R168. S217 functions as the Proton donor in the catalytic mechanism. E287 is a catalytic residue.

This sequence belongs to the MurB family. Requires FAD as cofactor.

It is found in the cytoplasm. The catalysed reaction is UDP-N-acetyl-alpha-D-muramate + NADP(+) = UDP-N-acetyl-3-O-(1-carboxyvinyl)-alpha-D-glucosamine + NADPH + H(+). It functions in the pathway cell wall biogenesis; peptidoglycan biosynthesis. Functionally, cell wall formation. In Rickettsia massiliae (strain Mtu5), this protein is UDP-N-acetylenolpyruvoylglucosamine reductase.